The following is a 198-amino-acid chain: V-type proton ATPase subunit E (198 aa).

This sequence belongs to the V-ATPase E subunit family.

Functionally, produces ATP from ADP in the presence of a proton gradient across the membrane. The polypeptide is V-type proton ATPase subunit E (Borrelia turicatae (strain 91E135)).